The following is a 30-amino-acid chain: Cyclotide vdif-A (30 aa).

Positions Gly1–Asn30 form a cross-link, cyclopeptide (Gly-Asn). 3 disulfide bridges follow: Cys4–Cys20, Cys8–Cys22, and Cys13–Cys27.

The protein belongs to the cyclotide family. Bracelet subfamily. Post-translationally, this is a cyclic peptide.

Functionally, probably participates in a plant defense mechanism. In Viola diffusa, this protein is Cyclotide vdif-A.